A 1673-amino-acid chain; its full sequence is Protein-methionine sulfoxide oxidase mical3b (1673 aa).

The tract at residues 2–492 (WDGQSEMCQA…RHLIDTGEGP (491 aa)) is monooxygenase domain. FAD contacts are provided by residues C96, 96-124 (CGLRTAIELGFLGARVVLVEKRDAFSRNN), E115, R117, R122, N124, and D396. The Calponin-homology (CH) domain occupies 512–618 (MARYSKLLSW…YLSQLHELLK (107 aa)). The interval 647–714 (SKLGQSLSRK…PKASEGHSKV (68 aa)) is disordered. The segment covering 661–671 (DKKEKEADSVG) has biased composition (basic and acidic residues). Positions 791–853 (DVCYFCGRRV…KHHFSFRLAS (63 aa)) constitute an LIM zinc-binding domain. Low complexity predominate over residues 882–892 (LSSLGSVGTAT). Disordered stretches follow at residues 882–901 (LSSLGSVGTATPDSWSSSTH), 918–938 (RIELENYKPSPQKQDSPLQEV), 951–1100 (SLQE…KRSE), 1159–1188 (QSARICDSSTQTHSVTDLQETSPLGPTDGD), and 1357–1393 (GPDADGDVKEKKRSSLFSPRKSRKNGNAAAESGRETG). Residues 973–992 (LVWKKGEELHARTNGERKLD) are compositionally biased toward basic and acidic residues. Acidic residues-rich tracts occupy residues 993–1002 (LEEELKEEEG) and 1010–1041 (EGEEEGEVSEEEQDEGDSSDESYEGCSDDPDI). Residues 1081 to 1094 (SDLTPDPSTTPESS) are compositionally biased toward low complexity. A compositionally biased stretch (polar residues) spans 1159-1182 (QSARICDSSTQTHSVTDLQETSPL). Coiled-coil stretches lie at residues 1475–1531 (EEEL…AVEK) and 1573–1638 (QEKN…VEQR). A bMERB domain is found at 1495–1661 (KQEELRRLHR…EKEEDSDLEA (167 aa)).

Belongs to the Mical family. FAD serves as cofactor.

The protein resides in the cytoplasm. It localises to the cytoskeleton. It is found in the nucleus. The catalysed reaction is L-methionyl-[F-actin] + NADPH + O2 + H(+) = L-methionyl-(R)-S-oxide-[F-actin] + NADP(+) + H2O. Functionally, monooxygenase that promotes depolymerization of F-actin by mediating oxidation of specific methionine residues on actin. Acts by modifying actin subunits through the addition of oxygen to form methionine-sulfoxide, leading to promote actin filament severing and prevent repolymerization. Involved in exocytic vesicles tethering and fusion: the monooxygenase activity is required for this process. The chain is Protein-methionine sulfoxide oxidase mical3b (mical3b) from Danio rerio (Zebrafish).